The sequence spans 295 residues: Protoheme IX farnesyltransferase (295 aa).

A run of 9 helical transmembrane segments spans residues 31-51 (GLVMITCAGGMWLAPGQIGAA), 54-74 (VLTVLATAVVVGAANALNCYL), 98-118 (FVALGLGIAAPAFAIPILSLA), 121-141 (GLTALLALVALLTYVLVYTPM), 147-167 (TALFVGAVPGAIPPLMGWTSV), 173-193 (AGGLALFGLLFAWQLPHFLAI), 220-240 (LWMALTTILLLPASLALVPLG), 245-265 (GYAITAAVLGLALSAYAISGI), and 273-293 (ARTFFLGTLVHLTVLFVALFL).

This sequence belongs to the UbiA prenyltransferase family. Protoheme IX farnesyltransferase subfamily.

The protein localises to the cell inner membrane. It catalyses the reaction heme b + (2E,6E)-farnesyl diphosphate + H2O = Fe(II)-heme o + diphosphate. The protein operates within porphyrin-containing compound metabolism; heme O biosynthesis; heme O from protoheme: step 1/1. Its function is as follows. Converts heme B (protoheme IX) to heme O by substitution of the vinyl group on carbon 2 of heme B porphyrin ring with a hydroxyethyl farnesyl side group. The chain is Protoheme IX farnesyltransferase from Anaeromyxobacter dehalogenans (strain 2CP-C).